The following is a 30-amino-acid chain: Diuretic hormone 2 (30 aa).

V30 carries the post-translational modification Valine amide.

This sequence belongs to the sauvagine/corticotropin-releasing factor/urotensin I family.

It localises to the secreted. Its function is as follows. Regulation of fluid secretion. This is Diuretic hormone 2 from Manduca sexta (Tobacco hawkmoth).